Reading from the N-terminus, the 504-residue chain is U3 snoRNP-associated protein-like YAO (504 aa).

The interval 1–120 (MKYNNEKKKG…DDDDDEDDDE (120 aa)) is disordered. Residues 20 to 33 (GSNERDPFFEEEPK) are compositionally biased toward basic and acidic residues. 2 stretches are compositionally biased toward acidic residues: residues 41 to 54 (DDDD…DAEE) and 70 to 81 (EVEDEDEFADET). Positions 89–106 (LAEEMLNRRREAMRRERE) are enriched in basic and acidic residues. Residues 107–120 (EADNDDDDDEDDDE) are compositionally biased toward acidic residues. WD repeat units follow at residues 159-198 (KHRR…TDKY), 220-259 (NHSR…HVQA), 262-301 (GHRN…FITE), 304-342 (GHQG…RMIY), 344-382 (APAS…PVFV), 413-452 (SANS…IRPL), and 456-496 (PLTG…QNGV).

The protein belongs to the WD repeat RRP9 family. Expressed in tissues with active in cell division such as shoot apexes, root tips, lateral root primordia, embryos, endosperm, pollen grains and embryo sacs.

The protein localises to the nucleus. The protein resides in the nucleolus. Functionally, component of a nucleolar small nuclear ribonucleoprotein particle (snoRNP) thought to participate in the processing and modification of pre-ribosomal RNA. Essential for embryogenesis. Plays a critical role in embryo sac development and gametic cell fate. Required for the correct positioning of the first division plane of zygote. May function during early embryogenesis. The protein is U3 snoRNP-associated protein-like YAO of Arabidopsis thaliana (Mouse-ear cress).